A 77-amino-acid chain; its full sequence is U8-lycotoxin-Ls1f (77 aa).

A signal peptide spans 1 to 20 (MKLIIFTGLVLFAIVSLIEV). Positions 21–26 (QADNER) are excised as a propeptide.

Belongs to the neurotoxin 19 (CSTX) family. 08 (U8-Lctx) subfamily. In terms of processing, contains 4 disulfide bonds. In terms of tissue distribution, expressed by the venom gland.

Its subcellular location is the secreted. The sequence is that of U8-lycotoxin-Ls1f from Lycosa singoriensis (Wolf spider).